We begin with the raw amino-acid sequence, 255 residues long: MALPDFTMRQLLEAGVHFGHQTHRWNPKMKPYIFGDRNNVHIIDLAQTVPMLSRALQVVSDTVASGGRVLFVGTKRQASEIIADAAKRSAQYYVNARWLGGMMTNWKTISNSIQRLRKLDEILASEASGFTKKERLNLEREREKLNRALGGIRDMGGTPDLMFIIDTNKESIAIDEAKRLGIPVVAVIDSNCDPDQIDYAIPGNDDASRAIALYCDLIARAAIDGIARQQGASGRDLGASEEVPVEPALEEASEA.

The segment at 232 to 255 (ASGRDLGASEEVPVEPALEEASEA) is disordered.

The protein belongs to the universal ribosomal protein uS2 family.

The sequence is that of Small ribosomal subunit protein uS2 from Rhizobium meliloti (strain 1021) (Ensifer meliloti).